The primary structure comprises 305 residues: UDP-3-O-acyl-N-acetylglucosamine deacetylase (305 aa).

Residues H78, H237, and D241 each contribute to the Zn(2+) site. Residue H264 is the Proton donor of the active site.

It belongs to the LpxC family. Zn(2+) is required as a cofactor.

It catalyses the reaction a UDP-3-O-[(3R)-3-hydroxyacyl]-N-acetyl-alpha-D-glucosamine + H2O = a UDP-3-O-[(3R)-3-hydroxyacyl]-alpha-D-glucosamine + acetate. Its pathway is glycolipid biosynthesis; lipid IV(A) biosynthesis; lipid IV(A) from (3R)-3-hydroxytetradecanoyl-[acyl-carrier-protein] and UDP-N-acetyl-alpha-D-glucosamine: step 2/6. In terms of biological role, catalyzes the hydrolysis of UDP-3-O-myristoyl-N-acetylglucosamine to form UDP-3-O-myristoylglucosamine and acetate, the committed step in lipid A biosynthesis. The chain is UDP-3-O-acyl-N-acetylglucosamine deacetylase from Paraburkholderia phytofirmans (strain DSM 17436 / LMG 22146 / PsJN) (Burkholderia phytofirmans).